Consider the following 291-residue polypeptide: Protein ZAR1-like (291 aa).

The segment at 103–152 (GSQTLHSSSLSDRTSSRKPTEAWEVGRRALIRRPQDGEDEESQEELTGPT) is disordered. The segment covering 106–115 (TLHSSSLSDR) has biased composition (low complexity). The segment covering 116–129 (TSSRKPTEAWEVGR) has biased composition (basic and acidic residues). Residues 195-280 (LKYGYFHCKD…QELCGHCKDK (86 aa)) form a 3CxxC-type zinc finger.

Belongs to the ZAR1 family. Interacts with YBX2. As to expression, expressed in oocytes and zygotes. Predominantly expressed in maturing oocytes before maternal-to-zygotic transition (MZT). Less abundant than Zar1.

The protein resides in the cytoplasm. Its subcellular location is the cytoplasmic ribonucleoprotein granule. In terms of biological role, mRNA-binding protein required for maternal mRNA storage, translation and degradation during oocyte maturation. Probably promotes formation of some phase-separated membraneless compartment that stores maternal mRNAs in oocytes: acts by undergoing liquid-liquid phase separation upon binding to maternal mRNAs. Binds to the 3'-UTR of maternal mRNAs, inhibiting their translation. The polypeptide is Protein ZAR1-like (Mus musculus (Mouse)).